A 100-amino-acid chain; its full sequence is Aspartyl/glutamyl-tRNA(Asn/Gln) amidotransferase subunit C (100 aa).

This sequence belongs to the GatC family. Heterotrimer of A, B and C subunits.

It carries out the reaction L-glutamyl-tRNA(Gln) + L-glutamine + ATP + H2O = L-glutaminyl-tRNA(Gln) + L-glutamate + ADP + phosphate + H(+). The enzyme catalyses L-aspartyl-tRNA(Asn) + L-glutamine + ATP + H2O = L-asparaginyl-tRNA(Asn) + L-glutamate + ADP + phosphate + 2 H(+). In terms of biological role, allows the formation of correctly charged Asn-tRNA(Asn) or Gln-tRNA(Gln) through the transamidation of misacylated Asp-tRNA(Asn) or Glu-tRNA(Gln) in organisms which lack either or both of asparaginyl-tRNA or glutaminyl-tRNA synthetases. The reaction takes place in the presence of glutamine and ATP through an activated phospho-Asp-tRNA(Asn) or phospho-Glu-tRNA(Gln). The protein is Aspartyl/glutamyl-tRNA(Asn/Gln) amidotransferase subunit C of Staphylococcus saprophyticus subsp. saprophyticus (strain ATCC 15305 / DSM 20229 / NCIMB 8711 / NCTC 7292 / S-41).